The sequence spans 476 residues: Sensor protein CzcS (476 aa).

The signal sequence occupies residues 1 to 35; that stretch reads MRPGTSITPLSLTRRLGLFFALVLSIALASMGAFA. The Periplasmic segment spans residues 37 to 158; that stretch reads YSLAAQLEAR…DRKQVTARFR (122 aa). Residues 159 to 179 form a helical membrane-spanning segment; that stretch reads TTLVLGTTVGVILTALVGAAI. At 180-476 the chain is on the cytoplasmic side; that stretch reads TRRELEPAHV…RPSQDRPVVG (297 aa). Residues 181 to 234 enclose the HAMP domain; it reads RRELEPAHVLIKQINRISVERLSYRVDMPPKPTEVRDIASAFNAMLQRLEDGYQ. The region spanning 242-455 is the Histidine kinase domain; that stretch reads DLAHDLRTPL…TRFTLRFPLN (214 aa). His-245 bears the Phosphohistidine; by autocatalysis mark.

Its subcellular location is the cell inner membrane. It catalyses the reaction ATP + protein L-histidine = ADP + protein N-phospho-L-histidine.. In terms of biological role, member of the two-component regulatory system CzcS/CzcR involved in the control of cobalt, zinc and cadmium homeostasis. Probably activates CzcR by phosphorylation. In Cupriavidus metallidurans (strain ATCC 43123 / DSM 2839 / NBRC 102507 / CH34) (Ralstonia metallidurans), this protein is Sensor protein CzcS (czcS).